The chain runs to 161 residues: Putative outer membrane protein YedS (161 aa).

Positions 1 to 21 (MKRKVLAMLVPALLVAGAANA) are cleaved as a signal peptide.

It belongs to the Gram-negative porin family.

Its subcellular location is the cell outer membrane. The chain is Putative outer membrane protein YedS (yedS) from Escherichia coli (strain K12).